The chain runs to 263 residues: Tryptophan synthase alpha chain (263 aa).

Residues glutamate 49 and aspartate 60 each act as proton acceptor in the active site.

This sequence belongs to the TrpA family. As to quaternary structure, tetramer of two alpha and two beta chains.

It carries out the reaction (1S,2R)-1-C-(indol-3-yl)glycerol 3-phosphate + L-serine = D-glyceraldehyde 3-phosphate + L-tryptophan + H2O. It functions in the pathway amino-acid biosynthesis; L-tryptophan biosynthesis; L-tryptophan from chorismate: step 5/5. Functionally, the alpha subunit is responsible for the aldol cleavage of indoleglycerol phosphate to indole and glyceraldehyde 3-phosphate. This chain is Tryptophan synthase alpha chain, found in Cereibacter sphaeroides (strain KD131 / KCTC 12085) (Rhodobacter sphaeroides).